The following is a 464-amino-acid chain: Interstitial collagenase A (464 aa).

An N-terminal signal peptide occupies residues 1 to 17 (MPSLPLLLLLWAASSYS). The propeptide at 18-96 (FPVFHNGDRQ…PRCGVPDVAP (79 aa)) is activation peptide. A Cysteine switch motif is present at residues 87–94 (PRCGVPDV). C89 is a binding site for Zn(2+). The metalloprotease stretch occupies residues 95-274 (APYAITHNNP…IQPTGATTPH (180 aa)). D155 contributes to the Ca(2+) binding site. Zn(2+)-binding residues include H165 and D167. Residues D172 and G173 each coordinate Ca(2+). H180 contributes to the Zn(2+) binding site. Positions 187, 189, and 191 each coordinate Ca(2+). H193 lines the Zn(2+) pocket. Positions 195 and 198 each coordinate Ca(2+). An N-linked (GlcNAc...) asparagine glycan is attached at N202. Zn(2+) is bound at residue H215. E216 is an active-site residue. 2 residues coordinate Zn(2+): H219 and H225. 2 Hemopexin repeats span residues 273–322 (PHPC…WPNL) and 323–369 (PVKL…FGFP). C276 and C464 are joined by a disulfide. Ca(2+) is bound at residue D283. N371 carries N-linked (GlcNAc...) asparagine glycosylation. 2 Hemopexin repeats span residues 372–420 (VTHI…FPGI) and 421–464 (DDKV…WFNC). Ca(2+) contacts are provided by D376 and D425.

The protein belongs to the peptidase M10A family. Ca(2+) is required as a cofactor. Zn(2+) serves as cofactor.

It localises to the secreted. The protein localises to the extracellular space. It is found in the extracellular matrix. It carries out the reaction Cleavage of the triple helix of collagen at about three-quarters of the length of the molecule from the N-terminus, at 775-Gly-|-Ile-776 in the alpha1(I) chain. Cleaves synthetic substrates and alpha-macroglobulins at bonds where P1' is a hydrophobic residue.. With respect to regulation, can be activated without removal of the activation peptide. Its function is as follows. Cleaves collagens of types I, II, and III at one site in the helical domain. Also cleaves collagens of types VII and X. Able to degrade synthetic peptides and type I and II fibrillar collagen. This chain is Interstitial collagenase A (Mmp1a), found in Mus musculus (Mouse).